The chain runs to 334 residues: Leukocyte cell-derived chemotaxin 1 (334 aa).

The chain crosses the membrane as a helical span at residues 46–66 (VVLISGAVLLLFGAIGAFYFW). The 97-residue stretch at 105-201 (GSGAEEAIEV…FCGDLPIFWL (97 aa)) folds into the BRICHOS domain. Cysteine 132 and cysteine 193 are joined by a disulfide. Positions 211–214 (RERR) are excised as a propeptide. A disordered region spans residues 212–268 (ERREVVRSSAPSTTRRPHSEPRGNAGPGRLSNRTRPSVQDDEEPFNPDNPYHQQEGE). Asparagine 243 is a glycosylation site (N-linked (GlcNAc...) asparagine). Disulfide bonds link cysteine 282-cysteine 286, cysteine 283-cysteine 323, cysteine 293-cysteine 317, and cysteine 297-cysteine 313.

The protein belongs to the chondromodulin-1 family. In terms of processing, after cleavage, the post-translationally modified ChM-I is secreted as a glycoprotein. As to expression, detected in cartilage, cardiac valves and valvular interstitial cells (at protein level). Expressed in eye.

The protein localises to the secreted. Its subcellular location is the extracellular space. It is found in the extracellular matrix. The protein resides in the endomembrane system. In terms of biological role, bifunctional growth regulator that stimulates the growth of cultured chondrocytes in the presence of basic fibroblast growth factor (FGF) but inhibits the growth of cultured vascular endothelial cells. May contribute to the rapid growth of cartilage and vascular invasion prior to the replacement of cartilage by bone during endochondral bone development. Inhibits in vitro tube formation and mobilization of endothelial cells. Plays a role as antiangiogenic factor in cardiac valves to suppress neovascularization. The protein is Leukocyte cell-derived chemotaxin 1 of Rattus norvegicus (Rat).